Reading from the N-terminus, the 130-residue chain is Small ribosomal subunit protein uS8 (130 aa).

It belongs to the universal ribosomal protein uS8 family. As to quaternary structure, part of the 30S ribosomal subunit.

Its function is as follows. One of the primary rRNA binding proteins, it binds directly to 16S rRNA central domain where it helps coordinate assembly of the platform of the 30S subunit. This is Small ribosomal subunit protein uS8 from Methanococcus aeolicus (strain ATCC BAA-1280 / DSM 17508 / OCM 812 / Nankai-3).